Reading from the N-terminus, the 75-residue chain is uncharacterized protein (75 aa).

Residues 3–45 (TTVFLSNRSQAVRLPKAVALPENVKRVEVIAVGRTRIITPAGE) enclose the SpoVT-AbrB domain.

It belongs to the VapB family.

This is an uncharacterized protein from Escherichia coli (strain K12).